Here is an 885-residue protein sequence, read N- to C-terminus: Alanine--tRNA ligase (885 aa).

Zn(2+)-binding residues include His-572, His-576, Cys-675, and His-679.

Belongs to the class-II aminoacyl-tRNA synthetase family. Zn(2+) serves as cofactor.

Its subcellular location is the cytoplasm. It carries out the reaction tRNA(Ala) + L-alanine + ATP = L-alanyl-tRNA(Ala) + AMP + diphosphate. Catalyzes the attachment of alanine to tRNA(Ala) in a two-step reaction: alanine is first activated by ATP to form Ala-AMP and then transferred to the acceptor end of tRNA(Ala). Also edits incorrectly charged Ser-tRNA(Ala) and Gly-tRNA(Ala) via its editing domain. This Leifsonia xyli subsp. xyli (strain CTCB07) protein is Alanine--tRNA ligase.